Consider the following 156-residue polypeptide: Ribonuclease pancreatic (156 aa).

The first 28 residues, 1-28 (MALEKSLVLLPLLVLILLVLGWVQPSLG), serve as a signal peptide directing secretion. The segment covering 33–43 (AKKFQRQHMDS) has biased composition (basic and acidic residues). A disordered region spans residues 33–52 (AKKFQRQHMDSDSSPSSNST). Substrate-binding residues include lysine 35 and arginine 38. The active-site Proton acceptor is histidine 40. Asparagine 50 and asparagine 62 each carry an N-linked (GlcNAc...) asparagine glycan. Disulfide bonds link cysteine 54–cysteine 112, cysteine 68–cysteine 123, cysteine 86–cysteine 138, and cysteine 93–cysteine 100. Residues 69–73 (KPVNT) and lysine 94 contribute to the substrate site. An N-linked (GlcNAc...) asparagine glycan is attached at asparagine 104. Residue arginine 113 participates in substrate binding. N-linked (GlcNAc...) asparagine glycosylation occurs at asparagine 116. Residue histidine 147 is the Proton donor of the active site.

Belongs to the pancreatic ribonuclease family. Monomer. Interacts with and forms tight 1:1 complexes with RNH1. Dimerization of two such complexes may occur. Interaction with RNH1 inhibits this protein.

The protein resides in the secreted. The catalysed reaction is an [RNA] containing cytidine + H2O = an [RNA]-3'-cytidine-3'-phosphate + a 5'-hydroxy-ribonucleotide-3'-[RNA].. It carries out the reaction an [RNA] containing uridine + H2O = an [RNA]-3'-uridine-3'-phosphate + a 5'-hydroxy-ribonucleotide-3'-[RNA].. Endonuclease that catalyzes the cleavage of RNA on the 3' side of pyrimidine nucleotides. Acts on single-stranded and double-stranded RNA. This chain is Ribonuclease pancreatic (RNASE1), found in Gorilla gorilla gorilla (Western lowland gorilla).